Consider the following 86-residue polypeptide: Large ribosomal subunit protein bL27 (86 aa).

Residues 1 to 22 (MATKKAGGSSRNGRDSAGRRLG) form a disordered region.

The protein belongs to the bacterial ribosomal protein bL27 family.

This chain is Large ribosomal subunit protein bL27, found in Rickettsia bellii (strain RML369-C).